Consider the following 282-residue polypeptide: MNMAETQLNPIARPTAPAGFDPAQSGQSQAPSRPKIEINDLNFFYGKYHALKNINLQIPEGKVTAFIGPSGCGKSTLLRTLNKMYALYPEQRAEGEILMDGENLLTTKRDISLLRARIGMVFQKPTPFPMSIYDNIAFGVKMFETLPRSEMDDRVEWALTKAALWNEVKDKLGQSGYGLSGGQQQRLCIARGIAIRPEVLLLDEPCSALDPISTGRIEELIAELKSDYTVVIVTHNMQQAARCSDYTAYMYLGELIEFGDTEKIFIKPVRKETEDYITGRFG.

Residues 1-33 (MNMAETQLNPIARPTAPAGFDPAQSGQSQAPSR) form a disordered region. The ABC transporter domain maps to 36–277 (IEINDLNFFY…PVRKETEDYI (242 aa)). ATP is bound at residue 68 to 75 (GPSGCGKS).

Belongs to the ABC transporter superfamily. Phosphate importer (TC 3.A.1.7) family. In terms of assembly, the complex is composed of two ATP-binding proteins (PstB), two transmembrane proteins (PstC and PstA) and a solute-binding protein (PstS).

The protein resides in the cell inner membrane. It carries out the reaction phosphate(out) + ATP + H2O = ADP + 2 phosphate(in) + H(+). In terms of biological role, part of the ABC transporter complex PstSACB involved in phosphate import. Responsible for energy coupling to the transport system. The sequence is that of Phosphate import ATP-binding protein PstB from Paraburkholderia xenovorans (strain LB400).